The sequence spans 327 residues: Glycerol-3-phosphate dehydrogenase [NAD(P)+] (327 aa).

Residues Trp-11, Arg-30, and Lys-103 each contribute to the NADPH site. Residues Lys-103, Gly-131, and Ser-133 each coordinate sn-glycerol 3-phosphate. Ala-135 provides a ligand contact to NADPH. Sn-glycerol 3-phosphate contacts are provided by Lys-186, Asp-243, Ser-253, Arg-254, and Asn-255. The active-site Proton acceptor is Lys-186. Arg-254 contributes to the NADPH binding site. Residues Val-281 and Glu-283 each coordinate NADPH.

Belongs to the NAD-dependent glycerol-3-phosphate dehydrogenase family.

The protein resides in the cytoplasm. It catalyses the reaction sn-glycerol 3-phosphate + NAD(+) = dihydroxyacetone phosphate + NADH + H(+). It carries out the reaction sn-glycerol 3-phosphate + NADP(+) = dihydroxyacetone phosphate + NADPH + H(+). It functions in the pathway membrane lipid metabolism; glycerophospholipid metabolism. In terms of biological role, catalyzes the reduction of the glycolytic intermediate dihydroxyacetone phosphate (DHAP) to sn-glycerol 3-phosphate (G3P), the key precursor for phospholipid synthesis. The sequence is that of Glycerol-3-phosphate dehydrogenase [NAD(P)+] from Wolbachia sp. subsp. Drosophila simulans (strain wRi).